The chain runs to 375 residues: Probable G-protein coupled receptor 27 (375 aa).

The Extracellular portion of the chain corresponds to 1-23; it reads MANASEPGGSGGGEAAALGLKLA. N-linked (GlcNAc...) asparagine glycosylation is present at Asn3. A helical membrane pass occupies residues 24-44; it reads TLSLLLCVSLAGNVLFALLIV. At 45 to 55 the chain is on the cytoplasmic side; that stretch reads RERSLHRAPYY. A helical membrane pass occupies residues 56-76; that stretch reads LLLDLCLADGLRALACLPAVM. Residues 77–97 are Extracellular-facing; that stretch reads LAARRAAAAAGAPPGALGCKL. Cys95 and Cys171 form a disulfide bridge. The chain crosses the membrane as a helical span at residues 98–118; the sequence is LAFLAALFCFHAAFLLLGVGV. Topologically, residues 119–139 are cytoplasmic; that stretch reads TRYLAIAHHRFYAERLAGWPC. The helical transmembrane segment at 140-160 threads the bilayer; the sequence is AAMLVCAAWALALAAAFPPVL. At 161 to 181 the chain is on the extracellular side; sequence DGGGDDEDAPCALEQRPDGAP. Residues 182-202 traverse the membrane as a helical segment; it reads GALGFLLLLAVVVGATHLVYL. Over 203–285 the chain is Cytoplasmic; that stretch reads RLLFFIHDRR…FKTEKRLCKM (83 aa). The chain crosses the membrane as a helical span at residues 286–306; sequence FYAVTLLFLLLWGPYVVASYL. At 307–320 the chain is on the extracellular side; the sequence is RVLVRPGAVPQAYL. Residues 321 to 341 traverse the membrane as a helical segment; sequence TASVWLTFAQAGINPVVCFLF. Residues 342 to 375 are Cytoplasmic-facing; the sequence is NRELRDCFRAQFPCCQSPRTTQATHPCDLKGIGL.

This sequence belongs to the G-protein coupled receptor 1 family. In terms of tissue distribution, highly expressed as a 3.0 kb transcript in brain, ovary, testis, heart, prostate and peripheral Leukocytes. Lower levels in pancreas and small intestine. A 2.3 kb transcript was also found in peripheral Leukocytes. In brain regions, detected as a 3.0 kb transcript in all regions tested. Highest levels in the caudate nucleus, putamen, hippocampus and subthalamic nucleus. Lowest level in the cerebellum.

It is found in the cell membrane. Functionally, orphan receptor. Possible candidate for amine-like G-protein coupled receptor. The polypeptide is Probable G-protein coupled receptor 27 (GPR27) (Homo sapiens (Human)).